A 550-amino-acid chain; its full sequence is Probable asparagine synthetase [glutamine-hydrolyzing] (550 aa).

Cys2 functions as the For GATase activity in the catalytic mechanism. A Glutamine amidotransferase type-2 domain is found at 2 to 189 (CGIICFIQYG…PNQYVTIDLS (188 aa)). L-glutamine-binding positions include 53–57 (RLAIM), 78–80 (NGE), and Asp100. Residues 213–530 (YYQSHKSLID…GGRDHIIPHY (318 aa)) enclose the Asparagine synthetase domain. ATP contacts are provided by residues Leu256, Val284, and 360 to 361 (SG).

It carries out the reaction L-aspartate + L-glutamine + ATP + H2O = L-asparagine + L-glutamate + AMP + diphosphate + H(+). It functions in the pathway amino-acid biosynthesis; L-asparagine biosynthesis; L-asparagine from L-aspartate (L-Gln route): step 1/1. In Acanthamoeba polyphaga mimivirus (APMV), this protein is Probable asparagine synthetase [glutamine-hydrolyzing].